The primary structure comprises 231 residues: Endonuclease NucS (231 aa).

Belongs to the NucS endonuclease family.

It is found in the cytoplasm. In terms of biological role, cleaves both 3' and 5' ssDNA extremities of branched DNA structures. This chain is Endonuclease NucS, found in Beutenbergia cavernae (strain ATCC BAA-8 / DSM 12333 / CCUG 43141 / JCM 11478 / NBRC 16432 / NCIMB 13614 / HKI 0122).